Consider the following 81-residue polypeptide: Cytotoxin 2 (81 aa).

A signal peptide spans 1-21 (MKTLLLTLVVVTIVCLDLGYT). 4 cysteine pairs are disulfide-bonded: Cys-24-Cys-42, Cys-35-Cys-59, Cys-63-Cys-74, and Cys-75-Cys-80.

The protein belongs to the three-finger toxin family. Short-chain subfamily. Type IA cytotoxin sub-subfamily. In terms of assembly, monomer in solution; Homodimer and oligomer in the presence of negatively charged lipids forming a pore with a size ranging between 20 and 30 Angstroms. Expressed by the venom gland.

The protein localises to the secreted. The protein resides in the target cell membrane. In terms of biological role, shows cytolytic activity on many different cells by forming pore in lipid membranes. In vivo, increases heart rate or kills the animal by cardiac arrest. In addition, it binds to heparin with high affinity, interacts with Kv channel-interacting protein 1 (KCNIP1) in a calcium-independent manner, and binds to integrin alpha-V/beta-3 (ITGAV/ITGB3) with moderate affinity. This Naja kaouthia (Monocled cobra) protein is Cytotoxin 2.